Reading from the N-terminus, the 2769-residue chain is Thyroglobulin (2769 aa).

A signal peptide spans 1-19; it reads MALALWVFGLLDLICLASA. Tyrosine 24 carries the iodotyrosine; alternate modification. Tyrosine 24 carries the post-translational modification Sulfotyrosine; alternate. Tyrosine 24 is modified (thyroxine; alternate). Tyrosine 24 is subject to Triiodothyronine; alternate. Thyroglobulin type-1 domains are found at residues 31–92, 93–160, 161–297, and 298–358; these read LRPC…PAAC, LSFC…PARC, PRSC…RFRC, and PTKC…PPSC. 8 cysteine pairs are disulfide-bonded: cysteine 34–cysteine 52, cysteine 63–cysteine 70, cysteine 72–cysteine 92, cysteine 96–cysteine 120, cysteine 131–cysteine 138, cysteine 140–cysteine 160, cysteine 164–cysteine 183, and cysteine 194–cysteine 235. The residue at position 108 (tyrosine 108) is an Iodotyrosine. Residue asparagine 110 is glycosylated (N-linked (GlcNAc...) (complex) asparagine; alternate). Asparagine 110 carries an N-linked (GlcNAc...) (hybrid) asparagine; alternate glycan. Tyrosine 149 carries the post-translational modification Iodotyrosine; alternate. Position 149 is a diiodotyrosine; alternate (tyrosine 149). Residues tyrosine 234 and tyrosine 258 each carry the iodotyrosine modification. Intrachain disulfides connect cysteine 301–cysteine 319, cysteine 330–cysteine 336, cysteine 338–cysteine 358, cysteine 364–cysteine 619, cysteine 408–cysteine 607, cysteine 630–cysteine 635, cysteine 637–cysteine 657, cysteine 661–cysteine 686, and cysteine 697–cysteine 702. 2 N-linked (GlcNAc...) (complex) asparagine; alternate glycosylation sites follow: asparagine 483 and asparagine 495. Asparagine 483 and asparagine 495 each carry an N-linked (GlcNAc...) (hybrid) asparagine; alternate glycan. 6 consecutive Thyroglobulin type-1 domains span residues 604-657, 658-725, 726-921, 922-1073, 1074-1145, and 1146-1210; these read SQGC…RPRC, PTEC…PKKC, PSPC…VPAC, PGSC…IPQC, PTSC…SAQC, and PSLC…QPAC. Tyrosine 703 bears the Iodotyrosine; alternate mark. Tyrosine 703 is subject to Thyroxine; alternate. Triiodothyronine; alternate is present on tyrosine 703. Residue tyrosine 703 is modified to Diiodotyrosine; alternate. 16 disulfide bridges follow: cysteine 704/cysteine 725, cysteine 729/cysteine 762, cysteine 773/cysteine 898, cysteine 900/cysteine 921, cysteine 925/cysteine 1031, cysteine 1042/cysteine 1049, cysteine 1051/cysteine 1073, cysteine 1077/cysteine 1108, cysteine 1126/cysteine 1145, cysteine 1149/cysteine 1169, cysteine 1181/cysteine 1188, cysteine 1190/cysteine 1210, cysteine 1215/cysteine 1264, cysteine 1231/cysteine 1245, cysteine 1306/cysteine 1356, and cysteine 1331/cysteine 1347. Residue tyrosine 784 is modified to Iodotyrosine. The N-linked (GlcNAc...) (complex) asparagine; alternate glycan is linked to asparagine 853. The N-linked (GlcNAc...) (hybrid) asparagine; alternate glycan is linked to asparagine 853. Position 866 is an iodotyrosine; alternate (tyrosine 866). At tyrosine 866 the chain carries Diiodotyrosine; alternate. Position 883 is a diiodotyrosine (tyrosine 883). An N-linked (GlcNAc...) (complex) asparagine; alternate glycan is attached at asparagine 947. Asparagine 947 carries N-linked (GlcNAc...) (hybrid) asparagine; alternate glycosylation. Iodotyrosine; alternate is present on tyrosine 992. Tyrosine 992 carries the post-translational modification Diiodotyrosine; alternate. N-linked (GlcNAc...) (complex) asparagine; alternate glycosylation occurs at asparagine 1140. An N-linked (GlcNAc...) (hybrid) asparagine; alternate glycan is attached at asparagine 1140. Tyrosine 1310 carries the post-translational modification Iodotyrosine. The residue at position 1310 (tyrosine 1310) is a Thyroxine. N-linked (GlcNAc...) (high mannose) asparagine glycosylation is present at asparagine 1365. Disulfide bonds link cysteine 1441/cysteine 1461, cysteine 1464/cysteine 1475, cysteine 1478/cysteine 1492, cysteine 1495/cysteine 1512, cysteine 1516/cysteine 1525, cysteine 1545/cysteine 1567, cysteine 1605/cysteine 1629, cysteine 1609/cysteine 1615, cysteine 1641/cysteine 1664, cysteine 1726/cysteine 1751, cysteine 1730/cysteine 1736, cysteine 1735/cysteine 1836, and cysteine 1762/cysteine 1779. Type II repeat units follow at residues 1458-1471, 1472-1488, and 1489-1505; these read ALGCVKCPEGSYFQ, DEQCIPCPAGFYQEQAG, and SLACVPCPEGRTTVYAG. Tyrosine 1469 is subject to Iodotyrosine; alternate. Residue tyrosine 1469 is modified to Diiodotyrosine; alternate. In terms of domain architecture, Thyroglobulin type-1 11 spans 1513–1567; that stretch reads VTDCQKNEVGLQCDQDSQYRASQRDRTSGKAFCVDGEGRRLPWTEAEAPLVDAQC. A Type IIIA repeat occupies 1605–1725; it reads CLADCALDEA…GASLAEVHLF (121 aa). The Type IIIB repeat unit spans residues 1726–1893; sequence CLLACDHDSC…LFSLQQANLW (168 aa). Asparagine 1776 carries N-linked (GlcNAc...) (complex) asparagine; alternate glycosylation. An N-linked (GlcNAc...) (hybrid) asparagine; alternate glycan is attached at asparagine 1776. Over residues 1827-1842 the composition is skewed to basic and acidic residues; the sequence is MGSRSESMGCRRDTEP. The tract at residues 1827 to 1851 is disordered; it reads MGSRSESMGCRRDTEPRPASPSETD. The N-linked (GlcNAc...) (complex) asparagine; alternate glycan is linked to asparagine 1870. A glycan (N-linked (GlcNAc...) (hybrid) asparagine; alternate) is linked at asparagine 1870. Cystine bridges form between cysteine 1894/cysteine 1920, cysteine 1898/cysteine 1905, cysteine 1929/cysteine 1940, cysteine 1997/cysteine 2025, cysteine 2001/cysteine 2007, cysteine 2006/cysteine 2077, and cysteine 2036/cysteine 2049. A Type IIIA repeat occupies 1894 to 1996; the sequence is CLSRCAGEPS…DKSISSGFFE (103 aa). Residues 1997–2130 form a Type IIIB repeat; the sequence is CERLCDMDPC…VGNFSAARDR (134 aa). Asparagine 2014 carries an N-linked (GlcNAc...) (high mannose) asparagine glycan. N-linked (GlcNAc...) (high mannose) asparagine glycosylation is present at asparagine 2123. Cystine bridges form between cysteine 2131–cysteine 2155, cysteine 2135–cysteine 2141, and cysteine 2164–cysteine 2173. Residues 2131 to 2188 form a Type IIIA repeat; that stretch reads CLWECSRHQDCLVTTLQTQPGAVRCMFYADTQSCTHSLQAQNCRLLLHEEATYIYRKP. At tyrosine 2185 the chain carries Iodotyrosine. The segment at 2189–2769 is cholinesterase-like (ChEL); the sequence is NIPLPGFGTS…PELASKTYSK (581 aa). N-linked (GlcNAc...) (complex) asparagine; alternate glycosylation occurs at asparagine 2251. Asparagine 2251 carries N-linked (GlcNAc...) (hybrid) asparagine; alternate glycosylation. Asparagine 2296 is a glycosylation site (N-linked (GlcNAc...) (high mannose) asparagine). Cysteine 2443 and cysteine 2454 are joined by a disulfide. A Thyroxine modification is found at tyrosine 2541. Tyrosine 2574 bears the Iodotyrosine; alternate mark. Residue tyrosine 2574 is modified to Thyroxine; alternate. Residue tyrosine 2574 is modified to Triiodothyronine; alternate. Tyrosine 2574 bears the Diiodotyrosine; alternate mark. Residues tyrosine 2588 and tyrosine 2618 each carry the iodotyrosine modification. Cysteine 2592 and cysteine 2716 are disulfide-bonded. Diiodotyrosine is present on tyrosine 2698. The tract at residues 2730–2769 is disordered; sequence ADETKDGPSADSEEEDQPAGSGLTEDLLGLPELASKTYSK. Residue tyrosine 2767 is modified to Iodotyrosine; alternate. Residue tyrosine 2767 is modified to Thyroxine; alternate. Tyrosine 2767 is subject to Triiodothyronine; alternate. At tyrosine 2767 the chain carries Diiodotyrosine; alternate.

The protein belongs to the type-B carboxylesterase/lipase family. As to quaternary structure, monomer. Homodimer (via ChEL region); occurs in the endoplasmic reticulum and is required for export to the Golgi apparatus. Homooligomer; disulfide-linked; stored in this form in the thyroid follicle lumen. Iodinated on tyrosine residues by TPO. There are 4 pairs of iodinated tyrosines used for coupling: acceptor Tyr-24 is coupled to donor Tyr-149 or Tyr-234, acceptor Tyr-2574 is coupled to donor Tyr-2541, acceptor Tyr-2767 in monomer 1 is coupled to donor Tyr-2767 in monomer 2 and acceptor Tyr-1310 in monomer 1 is coupled to donor Tyr-108 in monomer 2. Post-translationally, sulfated tyrosines are desulfated during iodination. In terms of processing, undergoes sequential proteolysis by cathepsins to release thyroxine (T4) and triiodothyronine (T3) hormones. In the thyroid follicle lumen, cross-linked TG (storage form) is solubilized by limited proteolysis mediated by cathepsins CTSB and/or CTSL. Partially cleaved TG is further processed by CTSK/cathepsin K and/or CTSL resulting in the release of T4. Following endocytosis, further processing occurs leading to the release of T3 and more T4 hormones. Specifically expressed in the thyroid gland.

Its subcellular location is the secreted. In terms of biological role, acts as a substrate for the production of iodinated thyroid hormones thyroxine (T4) and triiodothyronine (T3). The synthesis of T3 and T4 involves iodination of selected tyrosine residues of TG/thyroglobulin followed by their oxidative coupling. Following TG re-internalization and lysosomal-mediated proteolysis, T3 and T4 are released from the polypeptide backbone leading to their secretion into the bloodstream. One dimer produces 7 thyroid hormone molecules. The protein is Thyroglobulin (TG) of Bos taurus (Bovine).